The following is a 370-amino-acid chain: Phenylalanine dehydrogenase (370 aa).

Arginine 44 provides a ligand contact to NAD(+). Residue lysine 68 participates in L-phenylalanine binding. The active-site Proton donor/acceptor is lysine 80. Residue threonine 114 to aspartate 115 coordinates L-phenylalanine. NAD(+) is bound by residues aspartate 115, serine 146, threonine 150, glycine 180–phenylalanine 186, aspartate 203–valine 204, alanine 243–isoleucine 244, and alanine 264–asparagine 266. Residue asparagine 266 coordinates L-phenylalanine.

The protein belongs to the Glu/Leu/Phe/Val dehydrogenases family.

It catalyses the reaction L-phenylalanine + NAD(+) + H2O = 3-phenylpyruvate + NH4(+) + NADH + H(+). Its pathway is amino-acid biosynthesis; L-phenylalanine biosynthesis; L-phenylalanine from phenylpyruvate (PDH route): step 1/1. In terms of biological role, catalyzes the reversible NAD(+)-dependent oxidative deamination of L-phenylalanine to phenylpyruvate. The chain is Phenylalanine dehydrogenase from Caldalkalibacillus thermarum (strain TA2.A1).